The sequence spans 51 residues: Large ribosomal subunit protein eL39 (51 aa).

This sequence belongs to the eukaryotic ribosomal protein eL39 family.

The sequence is that of Large ribosomal subunit protein eL39 from Thermococcus onnurineus (strain NA1).